Reading from the N-terminus, the 397-residue chain is MRSPSAAWLLGAAILLAASLSCSGTIQGTNRSSKGRSLIGKVDGTSHVTGKGVTVETVFSVDEFSASVLTGKLTTVFLPIVYTIVFVVGLPSNGMALWVFLFRTKKKHPAVIYMANLALADLLSVIWFPLKIAYHIHGNNWIYGEALCNVLIGFFYGNMYCSILFMTCLSVQRYWVIVNPMGHSRKKANIAIGISLAIWLLILLVTIPLYVVKQTIFIPALNITTCHDVLPEQLLVGDMFNYFLSLAIGVFLFPAFLTASAYVLMIRMLRSSAMDENSEKKRKRAIKLIVTVLAMYLICFTPSNLLLVVHYFLIKSQGQSHVYALYIVALCLSTLNSCIDPFVYYFVSHDFRDHAKNALLCRSVRTVKQMQVSLTSKKHSRKSSSYSSSSTTVKTSY.

A signal peptide spans 1-25 (MRSPSAAWLLGAAILLAASLSCSGT). Residues 26-36 (IQGTNRSSKGR) constitute a propeptide, removed for receptor activation. An N-linked (GlcNAc...) asparagine glycan is attached at asparagine 30. Residues 37–71 (SLIGKVDGTSHVTGKGVTVETVFSVDEFSASVLTG) are Extracellular-facing. The helical transmembrane segment at 72 to 101 (KLTTVFLPIVYTIVFVVGLPSNGMALWVFL) threads the bilayer. Topologically, residues 102–108 (FRTKKKH) are cytoplasmic. Residues 109–137 (PAVIYMANLALADLLSVIWFPLKIAYHIH) form a helical membrane-spanning segment. The Extracellular portion of the chain corresponds to 138–149 (GNNWIYGEALCN). A disulfide bridge links cysteine 148 with cysteine 226. Residues 150 to 177 (VLIGFFYGNMYCSILFMTCLSVQRYWVI) traverse the membrane as a helical segment. Over 178–183 (VNPMGH) the chain is Cytoplasmic. Residues 184-211 (SRKKANIAIGISLAIWLLILLVTIPLYV) form a helical membrane-spanning segment. The Extracellular segment spans residues 212 to 235 (VKQTIFIPALNITTCHDVLPEQLL). Asparagine 222 carries N-linked (GlcNAc...) asparagine glycosylation. Residues 236 to 269 (VGDMFNYFLSLAIGVFLFPAFLTASAYVLMIRML) traverse the membrane as a helical segment. Residues 270–277 (RSSAMDEN) are Cytoplasmic-facing. A helical transmembrane segment spans residues 278 to 317 (SEKKRKRAIKLIVTVLAMYLICFTPSNLLLVVHYFLIKSQ). Over 318-323 (GQSHVY) the chain is Extracellular. The helical transmembrane segment at 324 to 347 (ALYIVALCLSTLNSCIDPFVYYFV) threads the bilayer. At 348-397 (SHDFRDHAKNALLCRSVRTVKQMQVSLTSKKHSRKSSSYSSSSTTVKTSY) the chain is on the cytoplasmic side. Cysteine 361 carries the S-palmitoyl cysteine lipid modification. A disordered region spans residues 373–397 (SLTSKKHSRKSSSYSSSSTTVKTSY). Residues 383–397 (SSSYSSSSTTVKTSY) are compositionally biased toward low complexity.

This sequence belongs to the G-protein coupled receptor 1 family. In terms of assembly, interacts with TLR4, COPS5 and TMED2. Interacts with GNAQ, GNA11, GNA12, GNA13 and GNA14. Post-translationally, a proteolytic cleavage generates a new N-terminus that functions as a tethered ligand. Activating serine proteases include trypsin, mast cell tryptase, coagulation factors VII and Xa, myeloblastin/PRTN3 and membrane-type serine protease 1/ST14. Subsequent cleavage by serine proteases, including neutrophil elastase and cathepsin G, leads to receptor deactivation. At least in part, implicated proteases are also shown to activate the receptor; the glycosylation status of the receptor is thought to contribute to the difference. In addition to conventional trypsin-like proteases activated by other proteases and glycosidases derived from bacteria, fungi and insects. Activated by serine protease allergens such as dust mite Der p3 and Der p9 and mold Pen c13. Activated by P.gingivalis arginine-specific (trypsin-like) cysteine proteinases called gingipains. Activated by S.griseus exogenous chitinase. Activated by A.alternata aspartate protease; the cleavage generates non-conventional processed forms. Proteolytically cleaved by coagulation factor Xa (F10); cleavage results in activation of F2RL1-dependent signaling. N-glycosylated and sialylated. In terms of processing, multiple phosphorylated on serine and threonine residues in the cytoplasmic region upon receptor activation; required for receptor desensitization and recruitment of beta-arrestin. Post-translationally, monoubiquitinated by CBL at the plasma membrane and in early endosomes; not required for receptor endocytosis but for translocation to late endosomes or lysosomes. Deubiquitination involves STAMBP and USP8; required for lysosomal trafficking and receptor degradation. As to expression, widely expressed in tissues with especially high levels in pancreas, liver, kidney, small intestine, and colon. Moderate expression is detected in many organs, but none in brain or skeletal muscle. Expressed in endothelial cells.

It is found in the cell membrane. Activated upon interaction by mucunain, a cowhage (Mucuna pruriens) plant cysteine proteinase. Functionally, receptor for trypsin and trypsin-like enzymes coupled to G proteins. Its function is mediated through the activation of several signaling pathways including phospholipase C (PLC), intracellular calcium, mitogen-activated protein kinase (MAPK), I-kappaB kinase/NF-kappaB and Rho. Can also be transactivated by cleaved F2R/PAR1. Involved in modulation of inflammatory responses and regulation of innate and adaptive immunity, and acts as a sensor for proteolytic enzymes generated during infection. Generally is promoting inflammation. Can signal synergistically with TLR4 and probably TLR2 in inflammatory responses and modulates TLR3 signaling. Has a protective role in establishing the endothelial barrier; the activity involves coagulation factor X. Regulates endothelial cell barrier integrity during neutrophil extravasation, probably following proteolytic cleavage by PRTN3. Proposed to have a bronchoprotective role in airway epithelium, but also shown to compromise the airway epithelial barrier by interrupting E-cadherin adhesion. Involved in the regulation of vascular tone; activation results in hypotension presumably mediated by vasodilation. Associates with a subset of G proteins alpha subunits such as GNAQ, GNA11, GNA14, GNA12 and GNA13, but probably not with G(o)-alpha, G(i) subunit alpha-1 and G(i) subunit alpha-2. However, according to PubMed:21627585 can signal through G(i) subunit alpha. Believed to be a class B receptor which internalizes as a complex with arrestin and traffic with it to endosomal vesicles, presumably as desensitized receptor, for extended periods of time. Mediates inhibition of TNF-alpha stimulated JNK phosphorylation via coupling to GNAQ and GNA11; the function involves dissociation of RIPK1 and TRADD from TNFR1. Mediates phosphorylation of nuclear factor NF-kappa-B RELA subunit at 'Ser-536'; the function involves IKBKB and is predominantly independent of G proteins. Involved in cellular migration. Involved in cytoskeletal rearrangement and chemotaxis through beta-arrestin-promoted scaffolds; the function is independent of GNAQ and GNA11 and involves promotion of cofilin dephosphorylation and actin filament severing. Induces redistribution of COPS5 from the plasma membrane to the cytosol and activation of the JNK cascade is mediated by COPS5. Involved in the recruitment of leukocytes to the sites of inflammation and is the major PAR receptor capable of modulating eosinophil function such as pro-inflammatory cytokine secretion, superoxide production and degranulation. During inflammation promotes dendritic cell maturation, trafficking to the lymph nodes and subsequent T-cell activation. Involved in antimicrobial response of innate immune cells; activation enhances phagocytosis of Gram-positive and killing of Gram-negative bacteria. Acts synergistically with interferon-gamma in enhancing antiviral responses. Implicated in a number of acute and chronic inflammatory diseases such as of the joints, lungs, brain, gastrointestinal tract, periodontium, skin, and vascular systems, and in autoimmune disorders. Probably mediates activation of pro-inflammatory and pro-fibrotic responses in fibroblasts, triggered by coagulation factor Xa (F10). Mediates activation of barrier protective signaling responses in endothelial cells, triggered by coagulation factor Xa (F10). This chain is Proteinase-activated receptor 2 (F2RL1), found in Homo sapiens (Human).